A 1207-amino-acid chain; its full sequence is Dermatan-sulfate epimerase-like protein (1207 aa).

Residues M1 to C22 form the signal peptide. N-linked (GlcNAc...) asparagine glycans are attached at residues N28, N661, N683, and N704. Transmembrane regions (helical) follow at residues F761–I781 and C798–C818. N869 is a glycosylation site (N-linked (GlcNAc...) asparagine).

It belongs to the dermatan-sulfate isomerase family.

Its subcellular location is the membrane. The polypeptide is Dermatan-sulfate epimerase-like protein (Dsel) (Mus musculus (Mouse)).